Consider the following 352-residue polypeptide: Holliday junction branch migration complex subunit RuvB (352 aa).

The tract at residues 1 to 182 is large ATPase domain (RuvB-L); sequence MRIELLNTPP…FGINSRFDYY (182 aa). ATP contacts are provided by residues Ile-21, Arg-22, Gly-63, Lys-66, Thr-67, Thr-68, 129-131, Arg-172, Tyr-182, and Arg-219; that span reads EDF. Residue Thr-67 coordinates Mg(2+). The segment at 183-253 is small ATPAse domain (RuvB-S); that stretch reads EPELLTRIII…IAMKTLECLE (71 aa). Positions 256–352 are head domain (RuvB-H); that stretch reads EEGLDEMDKK…LPLFDESEAD (97 aa). Residues Arg-292, Arg-311, and Arg-316 each coordinate DNA.

The protein belongs to the RuvB family. Homohexamer. Forms an RuvA(8)-RuvB(12)-Holliday junction (HJ) complex. HJ DNA is sandwiched between 2 RuvA tetramers; dsDNA enters through RuvA and exits via RuvB. An RuvB hexamer assembles on each DNA strand where it exits the tetramer. Each RuvB hexamer is contacted by two RuvA subunits (via domain III) on 2 adjacent RuvB subunits; this complex drives branch migration. In the full resolvosome a probable DNA-RuvA(4)-RuvB(12)-RuvC(2) complex forms which resolves the HJ.

It localises to the cytoplasm. It carries out the reaction ATP + H2O = ADP + phosphate + H(+). In terms of biological role, the RuvA-RuvB-RuvC complex processes Holliday junction (HJ) DNA during genetic recombination and DNA repair, while the RuvA-RuvB complex plays an important role in the rescue of blocked DNA replication forks via replication fork reversal (RFR). RuvA specifically binds to HJ cruciform DNA, conferring on it an open structure. The RuvB hexamer acts as an ATP-dependent pump, pulling dsDNA into and through the RuvAB complex. RuvB forms 2 homohexamers on either side of HJ DNA bound by 1 or 2 RuvA tetramers; 4 subunits per hexamer contact DNA at a time. Coordinated motions by a converter formed by DNA-disengaged RuvB subunits stimulates ATP hydrolysis and nucleotide exchange. Immobilization of the converter enables RuvB to convert the ATP-contained energy into a lever motion, pulling 2 nucleotides of DNA out of the RuvA tetramer per ATP hydrolyzed, thus driving DNA branch migration. The RuvB motors rotate together with the DNA substrate, which together with the progressing nucleotide cycle form the mechanistic basis for DNA recombination by continuous HJ branch migration. Branch migration allows RuvC to scan DNA until it finds its consensus sequence, where it cleaves and resolves cruciform DNA. This is Holliday junction branch migration complex subunit RuvB from Chlorobium chlorochromatii (strain CaD3).